The following is a 312-amino-acid chain: Tetraacyldisaccharide 4'-kinase (312 aa).

Position 60–67 (60–67) interacts with ATP; sequence IAGGSGKT.

Belongs to the LpxK family.

The enzyme catalyses a lipid A disaccharide + ATP = a lipid IVA + ADP + H(+). It functions in the pathway glycolipid biosynthesis; lipid IV(A) biosynthesis; lipid IV(A) from (3R)-3-hydroxytetradecanoyl-[acyl-carrier-protein] and UDP-N-acetyl-alpha-D-glucosamine: step 6/6. Transfers the gamma-phosphate of ATP to the 4'-position of a tetraacyldisaccharide 1-phosphate intermediate (termed DS-1-P) to form tetraacyldisaccharide 1,4'-bis-phosphate (lipid IVA). The chain is Tetraacyldisaccharide 4'-kinase from Helicobacter pylori (strain J99 / ATCC 700824) (Campylobacter pylori J99).